The sequence spans 571 residues: Cationic amino acid transporter 8 (571 aa).

N-linked (GlcNAc...) asparagine glycosylation occurs at asparagine 35. The next 6 helical transmembrane spans lie at 39-59 (FWLLVIIVIYTATSACIYFDW), 94-114 (SLYPITLAIHFTMSVFCGFLY), 117-137 (IGPKFTAIIGQMCNIMSWVFL), 148-168 (FLSFVFLGLGADTAFIPILTI), 177-197 (TFILTVVGAAASLSYAVPATL), and 217-237 (IFLILVPCLLVATFLLPLMPF). Asparagine 298, asparagine 325, and asparagine 346 each carry an N-linked (GlcNAc...) asparagine glycan. The chain crosses the membrane as a helical span at residues 365–385 (LFFKVLLSYPSICIIVYFILF). An N-linked (GlcNAc...) asparagine glycan is attached at asparagine 386. 5 consecutive transmembrane segments (helical) span residues 405–425 (SIINIINILMPISCIPCIIFG), 433–453 (SAIIIILMNAFSALMHLTALI), 461–481 (VSAFLYMCVTSIYTSQIYCFI), 488–508 (VVFGKLLGFASLCGGLFSLLC), and 528–548 (VVLLLVIAFILMFLPLTVLYF).

Belongs to the SLC43A transporter (TC 2.A.1.44) family.

It localises to the membrane. It carries out the reaction L-arginine(in) = L-arginine(out). Its function is as follows. Sodium-independent cationic amino acid transporter. Transports L-arginine, L-lysine, L-histidine and L-ornithine. In Plasmodium vivax (strain Salvador I), this protein is Cationic amino acid transporter 8.